Reading from the N-terminus, the 289-residue chain is MTILLTGGSGKTAGHIANLLKEAKLPFIVGSRSSNPHTVERHRTFDWLDEATFNNVLSVDEGMEPVSVVWLVSPPILDLAPPVIRFIDFASSRGVKRFVLLSASTVEKGGPAMGLIHAHLDTIEGVSYTVLRPSWFMENFSTRGEFPCDTIREEDTIYSAAKDGKIPFISVADIARVALRALTAPALHNKDHVLLGPELLTYDDVAEILTRVVGRNIHHVRLTESELAAKLQERGMPADEAAMHASLDSIVEAGAEEKLNTEVKDLTGEEPRHFADFVSDNKNVWLMRD.

It belongs to the fgaFS/easG family. As to quaternary structure, monomer.

The catalysed reaction is agroclavine + NADP(+) = didehydroagroclavine + NADPH + H(+). It functions in the pathway alkaloid biosynthesis; ergot alkaloid biosynthesis. Functionally, agroclavine dehydrogenase; part of the gene cluster that mediates the biosynthesis of fungal ergot alkaloid ergovaline, the predominant ergopeptine product in E.festucae var. lolii. DmaW catalyzes the first step of ergot alkaloid biosynthesis by condensing dimethylallyl diphosphate (DMAP) and tryptophan to form 4-dimethylallyl-L-tryptophan. The second step is catalyzed by the methyltransferase easF that methylates 4-dimethylallyl-L-tryptophan in the presence of S-adenosyl-L-methionine, resulting in the formation of 4-dimethylallyl-L-abrine. The catalase easC and the FAD-dependent oxidoreductase easE then transform 4-dimethylallyl-L-abrine to chanoclavine-I which is further oxidized by easD in the presence of NAD(+), resulting in the formation of chanoclavine-I aldehyde. Agroclavine dehydrogenase easG then mediates the conversion of chanoclavine-I aldehyde to agroclavine via a non-enzymatic adduct reaction: the substrate is an iminium intermediate that is formed spontaneously from chanoclavine-I aldehyde in the presence of glutathione. Further conversion of agroclavine to paspalic acid is a two-step process involving oxidation of agroclavine to elymoclavine and of elymoclavine to paspalic acid, the second step being performed by the elymoclavine oxidase cloA. However, cloA does not encode a functional enzyme indicating that C.fusiformis terminates its ergot alkaloid pathway at elymoclavine. This is Agroclavine dehydrogenase from Claviceps fusiformis (Ergot fungus).